The sequence spans 114 residues: MRMLLGSFAVYAAAALCEIGGCYAWWCWRRAGAGAWVLLPGMASLALFGWLLTLVDSDTAGRTFAAYGGIYIVGAIVWLRLVEGRPVTLRDAAGVAICLAGAAIILSAGRGAER.

A run of 4 helical transmembrane segments spans residues 8-28, 35-55, 64-84, and 92-112; these read FAVY…WWCW, AWVL…LTLV, FAAY…LVEG, and AAGV…GRGA.

This sequence belongs to the UPF0060 family.

It localises to the cell inner membrane. This is UPF0060 membrane protein GDI3492/Gdia_2889 from Gluconacetobacter diazotrophicus (strain ATCC 49037 / DSM 5601 / CCUG 37298 / CIP 103539 / LMG 7603 / PAl5).